The chain runs to 225 residues: Putative adhesin RT0816 (225 aa).

A signal peptide spans 1 to 22; it reads MKKLLLIAATSATILSSSISFA.

The sequence is that of Putative adhesin RT0816 from Rickettsia typhi (strain ATCC VR-144 / Wilmington).